A 120-amino-acid chain; its full sequence is NAD(P)H-quinone oxidoreductase subunit 3, chloroplastic (120 aa).

3 helical membrane passes run 11–31 (VVFFIVACLVPILALSGSKLI), 65–85 (FALIFVIFDVETLFLYPWAIV), and 89–109 (LGITAFLETLIFLSILIIGLV).

Belongs to the complex I subunit 3 family. In terms of assembly, NDH is composed of at least 16 different subunits, 5 of which are encoded in the nucleus.

The protein resides in the plastid. It localises to the chloroplast thylakoid membrane. The enzyme catalyses a plastoquinone + NADH + (n+1) H(+)(in) = a plastoquinol + NAD(+) + n H(+)(out). The catalysed reaction is a plastoquinone + NADPH + (n+1) H(+)(in) = a plastoquinol + NADP(+) + n H(+)(out). NDH shuttles electrons from NAD(P)H:plastoquinone, via FMN and iron-sulfur (Fe-S) centers, to quinones in the photosynthetic chain and possibly in a chloroplast respiratory chain. The immediate electron acceptor for the enzyme in this species is believed to be plastoquinone. Couples the redox reaction to proton translocation, and thus conserves the redox energy in a proton gradient. The protein is NAD(P)H-quinone oxidoreductase subunit 3, chloroplastic of Mesostigma viride (Green alga).